A 485-amino-acid polypeptide reads, in one-letter code: Alpha-amylase (485 aa).

The N-terminal stretch at 1–18 is a signal peptide; it reads MQHLSILLVVLGSSIAFA. Q19 bears the Pyrrolidone carboxylic acid mark. The cysteines at positions 46 and 102 are disulfide-linked. 3 residues coordinate Ca(2+): N116, R163, and D172. C152 and C165 are joined by a disulfide. Position 200 (R200) interacts with chloride. The active-site Nucleophile is the D202. H206 contributes to the Ca(2+) binding site. E238 functions as the Proton donor in the catalytic mechanism. N301 contacts chloride. C369 and C375 form a disulfide bridge. Residues N423 and N449 are each glycosylated (N-linked (GlcNAc...) asparagine). Cysteines 440 and 452 form a disulfide.

This sequence belongs to the glycosyl hydrolase 13 family. Monomer. The cofactor is Ca(2+). Chloride serves as cofactor.

The catalysed reaction is Endohydrolysis of (1-&gt;4)-alpha-D-glucosidic linkages in polysaccharides containing three or more (1-&gt;4)-alpha-linked D-glucose units.. Involved in the digestion of starch. The sequence is that of Alpha-amylase from Hypothenemus hampei (Coffee berry borer).